The chain runs to 271 residues: Carboxy-terminal domain RNA polymerase II polypeptide A small phosphatase 2 (271 aa).

Serine 5 is subject to Phosphoserine. The region spanning 97 to 255 (EDQGRICVVI…LNLIPIFEEL (159 aa)) is the FCP1 homology domain. Aspartate 107 serves as the catalytic 4-aspartylphosphate intermediate. Aspartate 107, aspartate 109, and asparagine 218 together coordinate Mg(2+). Residue aspartate 109 is the Proton donor of the active site.

As to quaternary structure, monomer. Interacts with REST. Mg(2+) serves as cofactor. As to expression, expression is restricted to non-neuronal tissues. Highest expression in pancreas and lowest in liver.

The protein resides in the nucleus. It catalyses the reaction O-phospho-L-seryl-[protein] + H2O = L-seryl-[protein] + phosphate. The catalysed reaction is O-phospho-L-threonyl-[protein] + H2O = L-threonyl-[protein] + phosphate. In terms of biological role, preferentially catalyzes the dephosphorylation of 'Ser-5' within the tandem 7 residue repeats in the C-terminal domain (CTD) of the largest RNA polymerase II subunit POLR2A. Negatively regulates RNA polymerase II transcription, possibly by controlling the transition from initiation/capping to processive transcript elongation. Recruited by REST to neuronal genes that contain RE-1 elements, leading to neuronal gene silencing in non-neuronal cells. May contribute to the development of sarcomas. In Homo sapiens (Human), this protein is Carboxy-terminal domain RNA polymerase II polypeptide A small phosphatase 2 (CTDSP2).